The sequence spans 116 residues: Large ribosomal subunit protein uL18 (116 aa).

This sequence belongs to the universal ribosomal protein uL18 family. Part of the 50S ribosomal subunit; part of the 5S rRNA/L5/L18/L25 subcomplex. Contacts the 5S and 23S rRNAs.

In terms of biological role, this is one of the proteins that bind and probably mediate the attachment of the 5S RNA into the large ribosomal subunit, where it forms part of the central protuberance. The polypeptide is Large ribosomal subunit protein uL18 (Shewanella loihica (strain ATCC BAA-1088 / PV-4)).